We begin with the raw amino-acid sequence, 455 residues long: 23S rRNA (uracil(1939)-C(5))-methyltransferase RlmD (455 aa).

The 59-residue stretch at S12–S70 folds into the TRAM domain. [4Fe-4S] cluster is bound by residues C83, C89, C92, and C174. Residues Q288, F317, N322, E338, D365, and D385 each coordinate S-adenosyl-L-methionine. The active-site Nucleophile is C411.

Belongs to the class I-like SAM-binding methyltransferase superfamily. RNA M5U methyltransferase family. RlmD subfamily.

It carries out the reaction uridine(1939) in 23S rRNA + S-adenosyl-L-methionine = 5-methyluridine(1939) in 23S rRNA + S-adenosyl-L-homocysteine + H(+). Catalyzes the formation of 5-methyl-uridine at position 1939 (m5U1939) in 23S rRNA. This Shewanella frigidimarina (strain NCIMB 400) protein is 23S rRNA (uracil(1939)-C(5))-methyltransferase RlmD.